A 309-amino-acid polypeptide reads, in one-letter code: Homoserine kinase (309 aa).

Position 95–105 (95–105) interacts with ATP; it reads PQSRGLGSSAA.

It belongs to the GHMP kinase family. Homoserine kinase subfamily.

Its subcellular location is the cytoplasm. The enzyme catalyses L-homoserine + ATP = O-phospho-L-homoserine + ADP + H(+). The protein operates within amino-acid biosynthesis; L-threonine biosynthesis; L-threonine from L-aspartate: step 4/5. Its function is as follows. Catalyzes the ATP-dependent phosphorylation of L-homoserine to L-homoserine phosphate. In Corynebacterium glutamicum (strain R), this protein is Homoserine kinase.